A 217-amino-acid chain; its full sequence is DNA repair protein homolog YobH (217 aa).

One can recognise a UmuC domain in the interval 1-68 (MAKAIQSSMW…RPLSKMWGIG (68 aa)).

Belongs to the DNA polymerase type-Y family.

The sequence is that of DNA repair protein homolog YobH (yobH) from Bacillus subtilis (strain 168).